Reading from the N-terminus, the 158-residue chain is MAVSIEEFSRIIIATLDLNFQILENFFTLLVVSATNSSLVSQGANLNFSNVWGLIYGGLVSNYWNSFAIHEVLNATQHNVSAMKNFSIAINYLGSNATTVFGDAEGTKGVTYLQKGIYDYLKSNPQEAENLASSLSRMFKAEVEFLIKLMGAVNTTFT.

This is an uncharacterized protein from Archaeoglobus fulgidus (strain ATCC 49558 / DSM 4304 / JCM 9628 / NBRC 100126 / VC-16).